Consider the following 918-residue polypeptide: Serine/threonine-protein kinase D1 (918 aa).

Position 93 is a phosphotyrosine (Tyr93). A Phorbol-ester/DAG-type 1 zinc finger spans residues 144-194; it reads PHALFVHSYRAPAFCDHCGEMLWGLVRQGLKCEGCGLNYHKRCAFKIPNNC. Ser203, Ser206, Ser217, and Ser221 each carry phosphoserine. The Phorbol-ester/DAG-type 2 zinc-finger motif lies at 276-326; that stretch reads PHTFVIHSYTRPTVCQFCKKLLKGLFRQGLQCKDCRFNCHKRCAPKVPNNC. 2 disordered regions span residues 338–362 and 379–410; these read SPGA…NSGL and AEGQ…SNNI. The span at 345-355 shows a compositional bias: acidic residues; sequence VVMEEGSDDND. Ser351 is subject to Phosphoserine. A compositionally biased stretch (polar residues) spans 400-410; it reads RTISPSTSNNI. 2 positions are modified to phosphoserine; by MAPK13: Ser403 and Ser407. Positions 428–547 constitute a PH domain; the sequence is TVMKEGWMVH…WEVAIQHALM (120 aa). At Tyr438 the chain carries Phosphotyrosine. Ser454 is subject to Phosphoserine. Phosphotyrosine; by ABL is present on Tyr469. Residue Tyr508 is modified to Phosphotyrosine. The residue at position 554 (Ser554) is a Phosphoserine. Residues 589 to 845 enclose the Protein kinase domain; the sequence is IFPDEVLGSG…VDKTLSHPWL (257 aa). ATP contacts are provided by residues 595–603 and Lys618; that span reads LGSGQFGIV. Asp712 functions as the Proton acceptor in the catalytic mechanism. Residue Ser744 is modified to Phosphoserine; by PKC/PRKCD. The residue at position 748 (Ser748) is a Phosphoserine; by autocatalysis and PKC/PRKCD. Tyr755 is subject to Phosphotyrosine. At Ser916 the chain carries Phosphoserine; by autocatalysis.

Belongs to the protein kinase superfamily. CAMK Ser/Thr protein kinase family. PKD subfamily. In terms of assembly, interacts (via N-terminus) with ADAP1/CENTA1. Interacts with MAPK13. Interacts with DAPK1 in an oxidative stress-regulated manner. Interacts with USP28; the interaction induces phosphorylation of USP28 and activated KRAS-mediated stabilization of ZNF304. Interacts with AKAP13 (via C-terminal domain). The cofactor is Mg(2+). Phosphorylated at Ser-403 and Ser-407 by MAPK13 during regulation of insulin secretion in pancreatic beta cells. Phosphorylated by DAPK1. Phosphorylated at Tyr-93 and by ABL at Tyr-469, which primes the kinase in response to oxidative stress, and promotes a second step activating phosphorylation at Ser-744/Ser-748 by PKRD. Phosphorylated at Ser-916 upon S.enterica infection in macrophages.

The protein localises to the cytoplasm. Its subcellular location is the cell membrane. It localises to the golgi apparatus. The protein resides in the trans-Golgi network. It catalyses the reaction L-seryl-[protein] + ATP = O-phospho-L-seryl-[protein] + ADP + H(+). The catalysed reaction is L-threonyl-[protein] + ATP = O-phospho-L-threonyl-[protein] + ADP + H(+). Activated by DAG and phorbol esters. Phorbol-ester/DAG-type domain 1 binds DAG with high affinity and appears to play the dominant role in mediating translocation to the cell membrane and trans-Golgi network. Phorbol-ester/DAG-type domain 2 binds phorbol ester with higher affinity. Autophosphorylation of Ser-748 and phosphorylation of Ser-744 by PKC relieves auto-inhibition by the PH domain. Phosphorylation on Tyr-469 by the SRC-ABL1 pathway in response to oxidative stress, is also required for activation. Activated by DAPK1 under oxidative stress. Serine/threonine-protein kinase that converts transient diacylglycerol (DAG) signals into prolonged physiological effects downstream of PKC, and is involved in the regulation of MAPK8/JNK1 and Ras signaling, Golgi membrane integrity and trafficking, cell survival through NF-kappa-B activation, cell migration, cell differentiation by mediating HDAC7 nuclear export, cell proliferation via MAPK1/3 (ERK1/2) signaling, and plays a role in cardiac hypertrophy, VEGFA-induced angiogenesis, genotoxic-induced apoptosis and flagellin-stimulated inflammatory response. Phosphorylates the epidermal growth factor receptor (EGFR) on dual threonine residues, which leads to the suppression of epidermal growth factor (EGF)-induced MAPK8/JNK1 activation and subsequent JUN phosphorylation. Phosphorylates RIN1, inducing RIN1 binding to 14-3-3 proteins YWHAB, YWHAE and YWHAZ and increased competition with RAF1 for binding to GTP-bound form of Ras proteins (NRAS, HRAS and KRAS). Acts downstream of the heterotrimeric G-protein beta/gamma-subunit complex to maintain the structural integrity of the Golgi membranes, and is required for protein transport along the secretory pathway. In the trans-Golgi network (TGN), regulates the fission of transport vesicles that are on their way to the plasma membrane. May act by activating the lipid kinase phosphatidylinositol 4-kinase beta (PI4KB) at the TGN for the local synthesis of phosphorylated inositol lipids, which induces a sequential production of DAG, phosphatidic acid (PA) and lyso-PA (LPA) that are necessary for membrane fission and generation of specific transport carriers to the cell surface. Under oxidative stress, is phosphorylated at Tyr-469 via SRC-ABL1 and contributes to cell survival by activating IKK complex and subsequent nuclear translocation and activation of NFKB1. Involved in cell migration by regulating integrin alpha-5/beta-3 recycling and promoting its recruitment in newly forming focal adhesion. In osteoblast differentiation, mediates the bone morphogenetic protein 2 (BMP2)-induced nuclear export of HDAC7, which results in the inhibition of HDAC7 transcriptional repression of RUNX2. In neurons, plays an important role in neuronal polarity by regulating the biogenesis of TGN-derived dendritic vesicles, and is involved in the maintenance of dendritic arborization and Golgi structure in hippocampal cells. May potentiate mitogenesis induced by the neuropeptide bombesin or vasopressin by mediating an increase in the duration of MAPK1/3 (ERK1/2) signaling, which leads to accumulation of immediate-early gene products including FOS that stimulate cell cycle progression. Plays an important role in the proliferative response induced by low calcium in keratinocytes, through sustained activation of MAPK1/3 (ERK1/2) pathway. Downstream of novel PKC signaling, plays a role in cardiac hypertrophy by phosphorylating HDAC5, which in turn triggers XPO1/CRM1-dependent nuclear export of HDAC5, MEF2A transcriptional activation and induction of downstream target genes that promote myocyte hypertrophy and pathological cardiac remodeling. Mediates cardiac troponin I (TNNI3) phosphorylation at the PKA sites, which results in reduced myofilament calcium sensitivity, and accelerated crossbridge cycling kinetics. The PRKD1-HDAC5 pathway is also involved in angiogenesis by mediating VEGFA-induced specific subset of gene expression, cell migration, and tube formation. In response to VEGFA, is necessary and required for HDAC7 phosphorylation which induces HDAC7 nuclear export and endothelial cell proliferation and migration. During apoptosis induced by cytarabine and other genotoxic agents, PRKD1 is cleaved by caspase-3 at Asp-378, resulting in activation of its kinase function and increased sensitivity of cells to the cytotoxic effects of genotoxic agents. In epithelial cells, is required for transducing flagellin-stimulated inflammatory responses by binding and phosphorylating TLR5, which contributes to MAPK14/p38 activation and production of inflammatory cytokines. Acts as an activator of NLRP3 inflammasome assembly by mediating phosphorylation of NLRP3. May play a role in inflammatory response by mediating activation of NF-kappa-B. May be involved in pain transmission by directly modulating TRPV1 receptor. Plays a role in activated KRAS-mediated stabilization of ZNF304 in colorectal cancer (CRC) cells. Regulates nuclear translocation of transcription factor TFEB in macrophages upon live S.enterica infection. This is Serine/threonine-protein kinase D1 (Prkd1) from Mus musculus (Mouse).